A 204-amino-acid polypeptide reads, in one-letter code: Salt stress root protein RS1 (204 aa).

A disordered region spans residues 128–204 (FVPKEEPKPE…AAPAAEPEKQ (77 aa)). Residues 147–161 (TSREVAVEEEKKEEE) are compositionally biased toward basic and acidic residues. The span at 164–180 (PAEPAAAAAEAAAPSTE) shows a compositional bias: low complexity. A compositionally biased stretch (basic and acidic residues) spans 182 to 192 (VEEKKEEEKPA). The span at 193 to 204 (EAAAPAAEPEKQ) shows a compositional bias: low complexity.

This sequence belongs to the DREPP family.

The sequence is that of Salt stress root protein RS1 from Oryza sativa subsp. indica (Rice).